The sequence spans 501 residues: Cobyric acid synthase (501 aa).

A GATase cobBQ-type domain is found at 251–446 (NIDIAIIRLS…LHGIFDSEEF (196 aa)). C332 acts as the Nucleophile in catalysis. H438 is a catalytic residue.

The protein belongs to the CobB/CobQ family. CobQ subfamily.

Its pathway is cofactor biosynthesis; adenosylcobalamin biosynthesis. Its function is as follows. Catalyzes amidations at positions B, D, E, and G on adenosylcobyrinic A,C-diamide. NH(2) groups are provided by glutamine, and one molecule of ATP is hydrogenolyzed for each amidation. The protein is Cobyric acid synthase of Clostridium botulinum (strain Alaska E43 / Type E3).